A 785-amino-acid polypeptide reads, in one-letter code: Altered inheritance of mitochondria protein 3-2 (785 aa).

Disordered regions lie at residues 33–122 (TGYQ…QPYM), 142–406 (QQVA…SENL), and 418–785 (NVDV…RLHK). Over residues 91-102 (GSSGNSANGSSA) the composition is skewed to low complexity. Composition is skewed to polar residues over residues 103–122 (TIPT…QPYM) and 143–199 (QVAT…QLNI). Positions 249–260 (KPYDWEEQKTTK) are enriched in basic and acidic residues. Polar residues-rich tracts occupy residues 283–310 (SRQG…TTTG), 350–366 (ATNN…QNTK), 375–388 (TNKS…SNVM), 395–405 (QMNTKANSSEN), and 455–465 (SSISRDNYNSI). Basic and acidic residues predominate over residues 478–497 (NTGEREGAQELKADIAERSQ). Polar residues predominate over residues 527 to 556 (AQTSSDIPQKSSLVTDESNISVPNKSQQPM). Composition is skewed to basic and acidic residues over residues 587–613 (KSLE…EQLK) and 624–637 (KNMK…DNKN). The segment covering 659 to 671 (SLTSEGNHMNLNT) has biased composition (polar residues). 2 stretches are compositionally biased toward basic and acidic residues: residues 672–686 (EKGK…DESK) and 700–710 (FKREELSKEVV).

It belongs to the AIM3 family.

The protein resides in the membrane raft. The chain is Altered inheritance of mitochondria protein 3-2 (AIM3-2) from Candida glabrata (strain ATCC 2001 / BCRC 20586 / JCM 3761 / NBRC 0622 / NRRL Y-65 / CBS 138) (Yeast).